The chain runs to 228 residues: MDSVKNILLEYGLRFQEPQIEKVDKYIEELLGVPYNLTAHRDLDSAVHKNVVEILLPLKEELKGTLLDVGSGNGVPGLILAIFFPKLKVVLLDSREKSVNFLRGVIEKLDLGNVSAVKERAENFSRERREEFDYVTARAVARLNVLVEICTPALKTGGKLLFYKGPSYIEELKEAQRAMKELKVELEEVREYSLKTGERRALLILRKYESSPEKYPRRVGVPFKRPLL.

S-adenosyl-L-methionine is bound by residues Gly-70, 121–122, and Arg-138; that span reads AE.

It belongs to the methyltransferase superfamily. RNA methyltransferase RsmG family.

The protein localises to the cytoplasm. Its function is as follows. Specifically methylates the N7 position of a guanine in 16S rRNA. This is Ribosomal RNA small subunit methyltransferase G from Thermotoga sp. (strain RQ2).